A 312-amino-acid chain; its full sequence is Small ribosomal subunit protein uS2 (312 aa).

Belongs to the universal ribosomal protein uS2 family. Component of the small ribosomal subunit. Mature ribosomes consist of a small (40S) and a large (60S) subunit. The 40S subunit contains about 33 different proteins and 1 molecule of RNA (18S). The 60S subunit contains about 49 different proteins and 3 molecules of RNA (25S, 5.8S and 5S). Interacts with ribosomal protein S21.

The protein localises to the cytoplasm. In terms of biological role, required for the assembly and/or stability of the 40S ribosomal subunit. Required for the processing of the 20S rRNA-precursor to mature 18S rRNA in a late step of the maturation of 40S ribosomal subunits. In Vitis vinifera (Grape), this protein is Small ribosomal subunit protein uS2.